The following is a 426-amino-acid chain: Enolase (426 aa).

(2R)-2-phosphoglycerate is bound at residue Gln-163. Glu-205 (proton donor) is an active-site residue. The Mg(2+) site is built by Asp-242, Glu-286, and Asp-313. (2R)-2-phosphoglycerate is bound by residues Lys-338, Arg-367, Ser-368, and Lys-389. Lys-338 acts as the Proton acceptor in catalysis.

Belongs to the enolase family. Mg(2+) is required as a cofactor.

It localises to the cytoplasm. The protein resides in the secreted. It is found in the cell surface. It carries out the reaction (2R)-2-phosphoglycerate = phosphoenolpyruvate + H2O. It participates in carbohydrate degradation; glycolysis; pyruvate from D-glyceraldehyde 3-phosphate: step 4/5. Catalyzes the reversible conversion of 2-phosphoglycerate (2-PG) into phosphoenolpyruvate (PEP). It is essential for the degradation of carbohydrates via glycolysis. This is Enolase from Helicobacter acinonychis (strain Sheeba).